The primary structure comprises 1463 residues: DNA-directed RNA polymerase subunit beta'' (1463 aa).

Residues Cys-239, Cys-312, Cys-319, and Cys-322 each coordinate Zn(2+). Disordered regions lie at residues 836–869 (TFTG…ETRM) and 987–1007 (TNRS…AQAR). The segment covering 860 to 869 (AANSSHETRM) has biased composition (polar residues). Positions 987–996 (TNRSKTRRNA) are enriched in basic residues. Positions 997–1007 (SGKTQVKAQAR) are enriched in polar residues.

Belongs to the RNA polymerase beta' chain family. RpoC2 subfamily. As to quaternary structure, in plastids the minimal PEP RNA polymerase catalytic core is composed of four subunits: alpha, beta, beta', and beta''. When a (nuclear-encoded) sigma factor is associated with the core the holoenzyme is formed, which can initiate transcription. Requires Zn(2+) as cofactor.

Its subcellular location is the plastid. It is found in the chloroplast. It catalyses the reaction RNA(n) + a ribonucleoside 5'-triphosphate = RNA(n+1) + diphosphate. Functionally, DNA-dependent RNA polymerase catalyzes the transcription of DNA into RNA using the four ribonucleoside triphosphates as substrates. The sequence is that of DNA-directed RNA polymerase subunit beta'' from Nephroselmis olivacea (Green alga).